The primary structure comprises 543 residues: MDAFTGSGLKRKFDDVDVGSSVSNSDDEISSSDSADSCDSLNPPTTASFTPTSILKRQKQLRRKNVRFDQVTVYYFARRQGFTSVPSQGGSSLGMAQRHNSVRSYTLCEFAQEQEVNHREILREHLKEEKLHAKKMKLTKNGTVESVEADGLTLDDVSDEDIDVENVEVDDYFFLQPLPTKRRRALLRASGVHRIDAEEKQELRAIRLSREECGCDCRLYCDPEACACSQAGIKCQVDRMSFPCGCSRDGCGNMAGRIEFNPIRVRTHYLHTIMKLELESKRQVSRPAAPDEEPSPTASCSLTGAQGSETQDFQEFIAENETAVMHLQSAEELERLKAEEDSSGSSASLDSSIESLGVCILEEPLAVPEELCPGLTAPILIQAQLPPGSSVLCFTENSDHPTASTVNSPSYLNSGPLVYYQVEQRPVLGVKGEPGTEEGSASFPKEKDLNVFSLPVTSLVACSSTDPAALCKSEVGKTPTLEALLPEDCNPEEPENEDFHPSWSPSSLPFRTDNEEGCGMVKTSQQNEDRPPEDSSLELPLAV.

Position 1 is an N-acetylmethionine (methionine 1). 3 disordered regions span residues 1–51 (MDAF…SFTP), 281–305 (KRQV…LTGA), and 488–543 (DCNP…PLAV). Positions 31-40 (SSDSADSCDS) are enriched in low complexity. Polar residues-rich tracts occupy residues 42–51 (NPPTTASFTP) and 296–305 (PTASCSLTGA).

It belongs to the AXUD1 family.

Its subcellular location is the nucleus. Its function is as follows. Binds to the consensus sequence 5'-AGAGTG-3' and has transcriptional activator activity. May play a role in apoptosis. The polypeptide is Cysteine/serine-rich nuclear protein 2 (CSRNP2) (Homo sapiens (Human)).